The sequence spans 650 residues: Threonine--tRNA ligase (650 aa).

A TGS domain is found at 1–66 (MVQITLPDGS…DQDAKLAIVT (66 aa)). The interval 247–538 (DHRKIGRDLD…LIENHAGAMP (292 aa)) is catalytic. Zn(2+) is bound by residues Cys338, His389, and His515.

Belongs to the class-II aminoacyl-tRNA synthetase family. Homodimer. Zn(2+) is required as a cofactor.

It localises to the cytoplasm. The enzyme catalyses tRNA(Thr) + L-threonine + ATP = L-threonyl-tRNA(Thr) + AMP + diphosphate + H(+). Its function is as follows. Catalyzes the attachment of threonine to tRNA(Thr) in a two-step reaction: L-threonine is first activated by ATP to form Thr-AMP and then transferred to the acceptor end of tRNA(Thr). Also edits incorrectly charged L-seryl-tRNA(Thr). The protein is Threonine--tRNA ligase of Bordetella avium (strain 197N).